Consider the following 138-residue polypeptide: Small ribosomal subunit protein uS11B (138 aa).

Positions 118 to 138 (DVTPVPSDSTRKKGGRRGRRL) are disordered. The segment covering 129-138 (KKGGRRGRRL) has biased composition (basic residues).

Belongs to the universal ribosomal protein uS11 family. As to quaternary structure, component of the small ribosomal subunit (SSU). Mature yeast ribosomes consist of a small (40S) and a large (60S) subunit. The 40S small subunit contains 1 molecule of ribosomal RNA (18S rRNA) and 33 different proteins (encoded by 57 genes). The large 60S subunit contains 3 rRNA molecules (25S, 5.8S and 5S rRNA) and 46 different proteins (encoded by 81 genes). uS11 interacts with eS1 forming part of the mRNA exit tunnel. uS11 interacts with snoRNA U3. uS11 interacts with MPP10. Component of the ribosomal small subunit (SSU) processome composed of at least 40 protein subunits and snoRNA U3.

It is found in the cytoplasm. Its subcellular location is the nucleus. The protein localises to the nucleolus. Functionally, component of the ribosome, a large ribonucleoprotein complex responsible for the synthesis of proteins in the cell. The small ribosomal subunit (SSU) binds messenger RNAs (mRNAs) and translates the encoded message by selecting cognate aminoacyl-transfer RNA (tRNA) molecules. The large subunit (LSU) contains the ribosomal catalytic site termed the peptidyl transferase center (PTC), which catalyzes the formation of peptide bonds, thereby polymerizing the amino acids delivered by tRNAs into a polypeptide chain. The nascent polypeptides leave the ribosome through a tunnel in the LSU and interact with protein factors that function in enzymatic processing, targeting, and the membrane insertion of nascent chains at the exit of the ribosomal tunnel. uS11 is involved in nucleolar processing of pre-18S ribosomal RNA and ribosome assembly. The chain is Small ribosomal subunit protein uS11B from Saccharomyces cerevisiae (strain ATCC 204508 / S288c) (Baker's yeast).